A 90-amino-acid chain; its full sequence is Probable Fe(2+)-trafficking protein (90 aa).

The protein belongs to the Fe(2+)-trafficking protein family.

Its function is as follows. Could be a mediator in iron transactions between iron acquisition and iron-requiring processes, such as synthesis and/or repair of Fe-S clusters in biosynthetic enzymes. The sequence is that of Probable Fe(2+)-trafficking protein from Stutzerimonas stutzeri (strain A1501) (Pseudomonas stutzeri).